Reading from the N-terminus, the 358-residue chain is Phenylalanine--tRNA ligase alpha subunit (358 aa).

Glu258 is a Mg(2+) binding site.

It belongs to the class-II aminoacyl-tRNA synthetase family. Phe-tRNA synthetase alpha subunit type 1 subfamily. In terms of assembly, tetramer of two alpha and two beta subunits. Mg(2+) is required as a cofactor.

The protein resides in the cytoplasm. It catalyses the reaction tRNA(Phe) + L-phenylalanine + ATP = L-phenylalanyl-tRNA(Phe) + AMP + diphosphate + H(+). This is Phenylalanine--tRNA ligase alpha subunit from Rhodospirillum centenum (strain ATCC 51521 / SW).